The chain runs to 570 residues: Rqc2 homolog RqcH (570 aa).

The tract at residues 1-173 is NFACT-N domain; sequence MSFDGMFTYG…LPPAQDKISP (173 aa). Residues 179–281 form a hhH domain region; the sequence is DDILRHLSFQ…ELLDRFYFGK (103 aa). Coiled-coil stretches lie at residues 279–336 and 368–430; these read FGKA…TANL and TPSE…VEGK. Positions 282–434 are coiled-coil-M (CCM); the sequence is AERDRVKQQA…ELVEGKYLRP (153 aa). The segment at 446 to 570 is NFACT-R; sequence HNPVLETYES…ADTVIKLKKS (125 aa).

The protein belongs to the NEMF family. As to quaternary structure, associates with isolated or stalled 50S ribosomal subunits. Binds to RqcP. Interacts with ribosomal protein uL11. Displaced from the 50S subunit by thiostrepton. In crystallized 50S subunits RqcH is variously associated with A/P-site tRNA, P-site tRNA and RqcP, an E-site tRNA or A- and P-site tRNAs and RqcP2(YlmH).

Key component of the ribosome quality control system (RQC), a ribosome-associated complex that mediates the extraction of incompletely synthesized nascent chains from stalled ribosomes and their subsequent degradation. RqcH recruits Ala-charged tRNA, and with RqcP directs the elongation of stalled nascent chains on 50S ribosomal subunits, leading to non-templated C-terminal alanine extensions (Ala tail). The Ala tail promotes nascent chain degradation. RqcH, RqcP and charged tRNA(Ala) are necessary and sufficient to add an Ala tail to a model stalled nascent peptide; does not add Val. Binds the P-site tRNA in 50S ribosomal subunit, unwinds the anticodon stem and interacts with the splayed anticodon. Selectively binds tRNA(Ala) isoacceptors, even in the absence of the 50S ribosomal subunit. Adds between 1 and at least 8 Ala residues to the nascent chain; detection of the Ala tail requires either deletion of clpP or its inhibition. Binds to 50S ribosomal subunits, at least 30% of which contain a P-site tRNA and thus are obstructed. This chain is Rqc2 homolog RqcH, found in Bacillus subtilis (strain 168).